The following is a 357-amino-acid chain: 4-hydroxy-2-oxovalerate aldolase (357 aa).

The tract at residues Met-1–Thr-21 is disordered. Residues Val-15–Leu-265 enclose the Pyruvate carboxyltransferase domain. A substrate-binding site is contributed by Arg-23–Asp-24. Asp-24 is a binding site for Mn(2+). Residue His-27 is the Proton acceptor of the active site. Residues Ser-177 and His-204 each contribute to the substrate site. His-204 and His-206 together coordinate Mn(2+).

This sequence belongs to the 4-hydroxy-2-oxovalerate aldolase family.

It carries out the reaction (S)-4-hydroxy-2-oxopentanoate = acetaldehyde + pyruvate. In terms of biological role, involved in the biosynthesis of the peptidyl nucleoside antibiotic nikkomycin. This chain is 4-hydroxy-2-oxovalerate aldolase, found in Streptomyces tendae.